Here is a 146-residue protein sequence, read N- to C-terminus: DNA-binding protein Rv2175c (146 aa).

The segment at 1–27 is disordered; it reads MPGRAPGSTLARVGSIPAGDDVLDPDE. Thr9 carries the post-translational modification Phosphothreonine.

Monomer in solution. May form homodimers. Interacts with phosphorylated PknL. In terms of processing, phosphorylated by PknL. Phosphorylation negatively regulates DNA-binding activity.

In terms of biological role, binds DNA at low salt concentrations. The chain is DNA-binding protein Rv2175c from Mycobacterium tuberculosis (strain ATCC 25618 / H37Rv).